Here is a 706-residue protein sequence, read N- to C-terminus: GDNF-inducible zinc finger protein 1 (706 aa).

Residues 31–103 form the BTB domain; that stretch reads CDVTVSIENQ…VYTAKVRVEE (73 aa). Positions 149-165 are enriched in polar residues; sequence VEASSGPQVSVTPSSKA. Disordered regions lie at residues 149–220 and 242–308; these read VEAS…PKIR and RRLR…KDGE. Composition is skewed to basic and acidic residues over residues 197 to 212 and 242 to 277; these read PSKKCKEKLDKKKDVA and RRLREQQKSAEEAAENDKCPQDQSPDNERMETEPAA. 10 C2H2-type zinc fingers span residues 315-337, 346-369, 375-398, 405-427, 433-455, 461-483, 489-511, 517-539, 545-567, and 573-595; these read FQCTVCDKAFLYEKSFLKHIKYH, YRCDTCGQTFANRCNLKSHQRHVH, FPCEMCAKKFKRKKDVKRHVLQVH, HRCGQCGKGLSSKTALRLHERTH, YGCTKCDAKFSQPSALKTHLRVH, FVCDECGARFTQNHMLIYHKRCH, FMCETCGKSFASKEYLKHHNRIH, FKCEVCLRTFAQRNSLYQHIKVH, YCCDQCGKQFTQVNALQRHHRIH, and YMCNACGRTFTDKSTLRRHTSIH. Position 611 is a phosphoserine (Ser-611).

Belongs to the krueppel C2H2-type zinc-finger protein family. As to quaternary structure, interacts with NCL. As to expression, expressed in several tissues, with highest levels in liver. Also expressed in embryos from 7 to 17 dpc.

It localises to the nucleus. The protein localises to the cytoplasm. The protein resides in the nucleolus. In terms of biological role, transcriptional repressor that binds the GZF1 responsive element (GRE) (consensus: 5'-TGCGCN[TG][CA]TATA-3'). May be regulating VSX2/HOX10 expression. The chain is GDNF-inducible zinc finger protein 1 from Mus musculus (Mouse).